A 681-amino-acid polypeptide reads, in one-letter code: DNA ligase (681 aa).

NAD(+)-binding positions include 35-39 (DAEYD), 84-85 (SI), and Glu-121. Lys-123 acts as the N6-AMP-lysine intermediate in catalysis. Residues Arg-144, Glu-180, Lys-300, and Lys-324 each coordinate NAD(+). Residues Cys-418, Cys-421, Cys-436, and Cys-442 each coordinate Zn(2+). A BRCT domain is found at 601 to 681 (AADGPASGKT…GLRRLLEQPA (81 aa)).

This sequence belongs to the NAD-dependent DNA ligase family. LigA subfamily. Requires Mg(2+) as cofactor. The cofactor is Mn(2+).

It carries out the reaction NAD(+) + (deoxyribonucleotide)n-3'-hydroxyl + 5'-phospho-(deoxyribonucleotide)m = (deoxyribonucleotide)n+m + AMP + beta-nicotinamide D-nucleotide.. In terms of biological role, DNA ligase that catalyzes the formation of phosphodiester linkages between 5'-phosphoryl and 3'-hydroxyl groups in double-stranded DNA using NAD as a coenzyme and as the energy source for the reaction. It is essential for DNA replication and repair of damaged DNA. The chain is DNA ligase from Aromatoleum aromaticum (strain DSM 19018 / LMG 30748 / EbN1) (Azoarcus sp. (strain EbN1)).